We begin with the raw amino-acid sequence, 209 residues long: Large ribosomal subunit protein uL3 (209 aa).

Gln-150 bears the N5-methylglutamine mark.

The protein belongs to the universal ribosomal protein uL3 family. Part of the 50S ribosomal subunit. Forms a cluster with proteins L14 and L19. Methylated by PrmB.

Its function is as follows. One of the primary rRNA binding proteins, it binds directly near the 3'-end of the 23S rRNA, where it nucleates assembly of the 50S subunit. The chain is Large ribosomal subunit protein uL3 from Vibrio vulnificus (strain YJ016).